Here is a 356-residue protein sequence, read N- to C-terminus: S-adenosylmethionine:tRNA ribosyltransferase-isomerase (356 aa).

This sequence belongs to the QueA family. In terms of assembly, monomer.

The protein resides in the cytoplasm. It carries out the reaction 7-aminomethyl-7-carbaguanosine(34) in tRNA + S-adenosyl-L-methionine = epoxyqueuosine(34) in tRNA + adenine + L-methionine + 2 H(+). It participates in tRNA modification; tRNA-queuosine biosynthesis. Functionally, transfers and isomerizes the ribose moiety from AdoMet to the 7-aminomethyl group of 7-deazaguanine (preQ1-tRNA) to give epoxyqueuosine (oQ-tRNA). The chain is S-adenosylmethionine:tRNA ribosyltransferase-isomerase from Escherichia coli O1:K1 / APEC.